A 311-amino-acid polypeptide reads, in one-letter code: Malate dehydrogenase (311 aa).

Residues 7–13 and aspartate 34 each bind NAD(+); that span reads GAAGGIG. Substrate-binding residues include arginine 81 and arginine 87. Residues asparagine 94 and 117 to 119 each bind NAD(+); that span reads ITN. Positions 119 and 153 each coordinate substrate. Histidine 177 acts as the Proton acceptor in catalysis. Methionine 227 contributes to the NAD(+) binding site.

This sequence belongs to the LDH/MDH superfamily. MDH type 1 family. As to quaternary structure, homodimer.

The catalysed reaction is (S)-malate + NAD(+) = oxaloacetate + NADH + H(+). Functionally, catalyzes the reversible oxidation of malate to oxaloacetate. The protein is Malate dehydrogenase of Shewanella halifaxensis (strain HAW-EB4).